Reading from the N-terminus, the 83-residue chain is Toxin CjTL8 (83 aa).

An N-terminal signal peptide occupies residues 1-20; that stretch reads MSSAIKILALLMVLVALAQA. The propeptide occupies 21-44; it reads KPRKDYRAYPDFDDKSVILEDDKR. At phenylalanine 81 the chain carries Phenylalanine amide.

In terms of processing, contains 3 disulfide bonds.

It is found in the secreted. Its subcellular location is the nematocyst. Functionally, in vivo, induces immediate paralysis on shrimps (C.multidentata), followed by death when high doses are injected. No activity is observed when injected into fly larvae (M.domestica). This chain is Toxin CjTL8, found in Epiactis japonica (Sea anemone).